Here is a 372-residue protein sequence, read N- to C-terminus: Flagellar P-ring protein (372 aa).

The N-terminal stretch at 1–26 is a signal peptide; it reads MNLSSLSFRLLATLLGACVVVAPASA.

Belongs to the FlgI family. As to quaternary structure, the basal body constitutes a major portion of the flagellar organelle and consists of four rings (L,P,S, and M) mounted on a central rod.

The protein localises to the periplasm. It localises to the bacterial flagellum basal body. In terms of biological role, assembles around the rod to form the L-ring and probably protects the motor/basal body from shearing forces during rotation. This Xanthomonas oryzae pv. oryzae (strain MAFF 311018) protein is Flagellar P-ring protein.